Consider the following 296-residue polypeptide: Fructose-bisphosphate aldolase class 1 (296 aa).

Glu-175 (proton acceptor) is an active-site residue. Catalysis depends on Lys-212, which acts as the Schiff-base intermediate with dihydroxyacetone-P.

This sequence belongs to the class I fructose-bisphosphate aldolase family.

It catalyses the reaction beta-D-fructose 1,6-bisphosphate = D-glyceraldehyde 3-phosphate + dihydroxyacetone phosphate. It participates in carbohydrate degradation; glycolysis; D-glyceraldehyde 3-phosphate and glycerone phosphate from D-glucose: step 4/4. The chain is Fructose-bisphosphate aldolase class 1 from Staphylococcus aureus (strain MSSA476).